Consider the following 196-residue polypeptide: Pyridoxal 5'-phosphate synthase subunit PdxT (196 aa).

47-49 lines the L-glutamine pocket; sequence GES. Cys79 functions as the Nucleophile in the catalytic mechanism. Residues Arg106 and 134–135 contribute to the L-glutamine site; that span reads IR. Residues His170 and Glu172 each act as charge relay system in the active site.

It belongs to the glutaminase PdxT/SNO family. As to quaternary structure, in the presence of PdxS, forms a dodecamer of heterodimers. Only shows activity in the heterodimer.

It carries out the reaction aldehydo-D-ribose 5-phosphate + D-glyceraldehyde 3-phosphate + L-glutamine = pyridoxal 5'-phosphate + L-glutamate + phosphate + 3 H2O + H(+). The catalysed reaction is L-glutamine + H2O = L-glutamate + NH4(+). It participates in cofactor biosynthesis; pyridoxal 5'-phosphate biosynthesis. Its function is as follows. Catalyzes the hydrolysis of glutamine to glutamate and ammonia as part of the biosynthesis of pyridoxal 5'-phosphate. The resulting ammonia molecule is channeled to the active site of PdxS. The chain is Pyridoxal 5'-phosphate synthase subunit PdxT from Bacillus licheniformis (strain ATCC 14580 / DSM 13 / JCM 2505 / CCUG 7422 / NBRC 12200 / NCIMB 9375 / NCTC 10341 / NRRL NRS-1264 / Gibson 46).